The sequence spans 163 residues: Nucleotide-binding protein Ava_2001 (163 aa).

The protein belongs to the YajQ family.

Nucleotide-binding protein. The chain is Nucleotide-binding protein Ava_2001 from Trichormus variabilis (strain ATCC 29413 / PCC 7937) (Anabaena variabilis).